Consider the following 1395-residue polypeptide: DNA-directed RNA polymerase subunit beta' (1395 aa).

Zn(2+) is bound by residues cysteine 70, cysteine 72, cysteine 85, and cysteine 88. Positions 461, 463, and 465 each coordinate Mg(2+). The Zn(2+) site is built by cysteine 815, cysteine 889, cysteine 896, and cysteine 899.

It belongs to the RNA polymerase beta' chain family. As to quaternary structure, the RNAP catalytic core consists of 2 alpha, 1 beta, 1 beta' and 1 omega subunit. When a sigma factor is associated with the core the holoenzyme is formed, which can initiate transcription. Mg(2+) serves as cofactor. It depends on Zn(2+) as a cofactor.

The enzyme catalyses RNA(n) + a ribonucleoside 5'-triphosphate = RNA(n+1) + diphosphate. In terms of biological role, DNA-dependent RNA polymerase catalyzes the transcription of DNA into RNA using the four ribonucleoside triphosphates as substrates. The protein is DNA-directed RNA polymerase subunit beta' of Ruthia magnifica subsp. Calyptogena magnifica.